Here is a 274-residue protein sequence, read N- to C-terminus: Mitogen-activated protein kinase 4 (274 aa).

Residues 1–8 (GCGGNGLV) and Lys23 each bind ATP. Positions 1-274 (GCGGNGLVLS…KILTFSPMDR (274 aa)) constitute a Protein kinase domain. Catalysis depends on Asp123, which acts as the Proton acceptor. Position 160 is a phosphoserine (Ser160). An SEG motif motif is present at residues 160-162 (SEG).

It belongs to the protein kinase superfamily. CMGC Ser/Thr protein kinase family. MAP kinase subfamily. In terms of assembly, homodimer. Heterodimer with ERK3/MAPK6. Interacts with MAPKAPK5. Requires Mg(2+) as cofactor. Post-translationally, phosphorylated by PAK1, PAK2 and PAK3 in the activation loop resulting in catalytic activation. Phosphorylated by MAPKAPK5 at other sites. As to expression, exclusively detected in the brain, where expression is restricted to the choroid plexus and hippocampus, and to a lesser extent in lung.

The protein localises to the cytoplasm. It is found in the nucleus. The catalysed reaction is L-seryl-[protein] + ATP = O-phospho-L-seryl-[protein] + ADP + H(+). It carries out the reaction L-threonyl-[protein] + ATP = O-phospho-L-threonyl-[protein] + ADP + H(+). With respect to regulation, activated by phosphorylation in the activation loop. Its function is as follows. Atypical MAPK protein. Phosphorylates microtubule-associated protein 2 (MAP2) and MAPKAPK5. The precise role of the complex formed with MAPKAPK5 is still unclear, but the complex follows a complex set of phosphorylation events: upon interaction with atypical MAPKAPK5, ERK4/MAPK4 is phosphorylated and then mediates phosphorylation and activation of MAPKAPK5, which in turn phosphorylates ERK4/MAPK4. May promote entry in the cell cycle. The polypeptide is Mitogen-activated protein kinase 4 (Mapk4) (Rattus norvegicus (Rat)).